The following is a 222-amino-acid chain: Small ribosomal subunit protein eS1 (222 aa).

It belongs to the eukaryotic ribosomal protein eS1 family.

In Pyrobaculum neutrophilum (strain DSM 2338 / JCM 9278 / NBRC 100436 / V24Sta) (Thermoproteus neutrophilus), this protein is Small ribosomal subunit protein eS1.